The primary structure comprises 535 residues: Triacylglyceride transporter MHAS_02168/C731_2106 (535 aa).

At 1-18 (MAFPQTPNRLIRPRRTSR) the chain is on the cytoplasmic side. A helical membrane pass occupies residues 19–39 (GIAISAGGLAVLLGALDTYVV). The Periplasmic portion of the chain corresponds to 40 to 60 (VSIVTDIMRDVGIAVNQIQRV). The helical transmembrane segment at 61-82 (TPIITGYLLGYIAAMPLLGRAS) threads the bilayer. Residues 83–86 (DRFG) lie on the Cytoplasmic side of the membrane. The helical transmembrane segment at 87–107 (RKLLIQISLAGFALGSVITAL) threads the bilayer. The Periplasmic segment spans residues 108–111 (ATNL). Residues 112 to 136 (DVLVAGRVIQGAASGALLPVTLALA) form a helical membrane-spanning segment. Over 137 to 145 (ADLWATHKR) the chain is Cytoplasmic. A helical transmembrane segment spans residues 146–167 (AAVLGGVGAAQELGAVLGPIYG). Residues 168–177 (IFVVWLFHHW) lie on the Periplasmic side of the membrane. The helical transmembrane segment at 178-198 (QAVFWVNVPLALIAMVLIHIS) threads the bilayer. Residues 199–212 (LPPRVRTEEPQRVD) lie on the Cytoplasmic side of the membrane. A helical membrane pass occupies residues 213-230 (VTGGLLLALALGLATIGL). Residues 231–243 (YNAEPDGKQVLPE) lie on the Periplasmic side of the membrane. The helical transmembrane segment at 244-263 (YGPPLIIGAVIAAVAFLVWE) threads the bilayer. At 264–278 (RFARTRLLDPAGVRF) the chain is on the cytoplasmic side. A helical transmembrane segment spans residues 279–300 (RPFLIALLVSLVTGGALMVTLV). The Periplasmic segment spans residues 301-320 (NVELFGQGVLGLDQDEAVFL). Transmembrane regions (helical) follow at residues 321-343 (LARF…TRVG) and 344-364 (DRAV…LIAQ). Residues 365–384 (WPADVLESRHDLGFVSLPTL) lie on the Periplasmic side of the membrane. Positions 373-382 (RHDLGFVSLP) are beta-hairpin. Residues 385–407 (DTDLAIAGFGLGLVIAPLTSAAL) traverse the membrane as a helical segment. Residues 408–415 (RVVPAAQH) lie on the Cytoplasmic side of the membrane. The chain crosses the membrane as a helical span at residues 416–440 (GIASAAVVVARMIGMLIGIAALSAW). Over 441–487 (GLYRFNQYLKEQLAALPPAPADFPGGQMAGQMMRLRTATVQAYVLQY) the chain is Periplasmic. Residues 488 to 507 (GEIFAITAGLCVFGAVLGLF) traverse the membrane as a helical segment. Residues 508–535 (IAGRREHAEESADAVDGVSNARDRAPSA) are Cytoplasmic-facing.

Belongs to the major facilitator superfamily. P55 (TC 2.A.1.3.34) family.

The protein localises to the cell inner membrane. In association with lipoprotein LprG transports triacylglycerides (TAG) across the inner cell membrane, probably transfering them to lipoprotein LprG in the periplasm. TAG probably regulates lipid metabolism and growth regulation and plays a structural role in the outer membrane. Mutagenesis and molecular modeling suggests TAG (and maybe other lipids) enters the central cavity of the P55 transporter from within the cell inner membrane via clefts on the cytoplasmic face of P55 between TM5-TM8 and TM2-TM11. From there the lipid is probably transferred to the hydrophobic cavity of LprG. The lprG-MHAS_02167/C731_2107 operon complements the vancomycin sensitivity of an M.smegmatis knockout of the same operon. Probably required with LprG for normal surface localization of lipoarabinomannan (LAM). The chain is Triacylglyceride transporter MHAS_02168/C731_2106 from Mycolicibacterium hassiacum (strain DSM 44199 / CIP 105218 / JCM 12690 / 3849) (Mycobacterium hassiacum).